Reading from the N-terminus, the 212-residue chain is Ribonuclease HII (212 aa).

Residues 1 to 206 (MICGVDEAGK…VKNLLHQKNQ (206 aa)) form the RNase H type-2 domain. Residues Asp6, Glu7, and Asp101 each coordinate a divalent metal cation.

Belongs to the RNase HII family. Requires Mn(2+) as cofactor. Mg(2+) is required as a cofactor.

It localises to the cytoplasm. The enzyme catalyses Endonucleolytic cleavage to 5'-phosphomonoester.. Its function is as follows. Endonuclease that specifically degrades the RNA of RNA-DNA hybrids. The polypeptide is Ribonuclease HII (Methanospirillum hungatei JF-1 (strain ATCC 27890 / DSM 864 / NBRC 100397 / JF-1)).